Here is a 445-residue protein sequence, read N- to C-terminus: Baccatin III:3-amino-3-phenylpropanoyltransferase (445 aa).

This sequence belongs to the plant acyltransferase family.

It catalyses the reaction (3R)-3-amino-3-phenylpropanoyl-CoA + baccatin III = 3'-N-debenzoyl-2'-deoxytaxol + CoA. It participates in alkaloid biosynthesis; taxol biosynthesis. In terms of biological role, acyltransferase involved in taxol biosynthesis. Catalyzes the selective 13-O-acylation of baccatin III with (3R)-3-amino-3-phenylpropanoyl-CoA as the acyl donor to form 3'-N-debenzoyl-2'-deoxytaxol. The sequence is that of Baccatin III:3-amino-3-phenylpropanoyltransferase from Taxus cuspidata (Japanese yew).